The following is a 199-amino-acid chain: Chaperone protein TorD (199 aa).

It belongs to the TorD/DmsD family. TorD subfamily.

It is found in the cytoplasm. In terms of biological role, involved in the biogenesis of TorA. Acts on TorA before the insertion of the molybdenum cofactor and, as a result, probably favors a conformation of the apoenzyme that is competent for acquiring the cofactor. The protein is Chaperone protein TorD of Actinobacillus pleuropneumoniae serotype 3 (strain JL03).